The sequence spans 785 residues: Endonuclease MutS2 (785 aa).

334–341 (GPNTGGKT) serves as a coordination point for ATP. Positions 710 to 785 (LDLRGYNVED…GVGATIAELK (76 aa)) constitute a Smr domain.

Belongs to the DNA mismatch repair MutS family. MutS2 subfamily. Homodimer. Binds to stalled ribosomes, contacting rRNA.

Functionally, endonuclease that is involved in the suppression of homologous recombination and thus may have a key role in the control of bacterial genetic diversity. Acts as a ribosome collision sensor, splitting the ribosome into its 2 subunits. Detects stalled/collided 70S ribosomes which it binds and splits by an ATP-hydrolysis driven conformational change. Acts upstream of the ribosome quality control system (RQC), a ribosome-associated complex that mediates the extraction of incompletely synthesized nascent chains from stalled ribosomes and their subsequent degradation. Probably generates substrates for RQC. The sequence is that of Endonuclease MutS2 from Brevibacillus brevis (strain 47 / JCM 6285 / NBRC 100599).